A 343-amino-acid chain; its full sequence is Transmembrane protein 120A (343 aa).

Residues 1 to 132 (MQPPPPGPLG…KQAKFAYKDE (132 aa)) are Cytoplasmic-facing. Lys-130 is a binding site for CoA. The chain crosses the membrane as a helical span at residues 133–152 (YEKFKLYLTIILILISFTCR). The Extracellular portion of the chain corresponds to 153-158 (FLLNSR). Residues 159–177 (VTDAAFNFLLVWYYCTLTI) form a helical membrane-spanning segment. Residues 178 to 190 (RESILINNGSRIK) lie on the Cytoplasmic side of the membrane. CoA contacts are provided by Ser-187 and Arg-188. Residues 191-209 (GWWVFHHYVSTFLSGVMLT) traverse the membrane as a helical segment. Residues 210-218 (WPDGLMYQK) are Extracellular-facing. Residues 219–240 (FRNQFLSFSMYQSFVQFLQYYY) form a helical membrane-spanning segment. Residues Gln-237, Tyr-240, Gln-241, and His-283 each coordinate CoA. Topologically, residues 241-270 (QSGCLYRLRALGERHTMDLTVEGFQSWMWR) are cytoplasmic. Residues 271 to 294 (GLTFLLPFLFFGHFWQLFNALTLF) traverse the membrane as a helical segment. Over 295–304 (NLAQDPQCKE) the chain is Extracellular. The chain crosses the membrane as a helical span at residues 305–330 (WQVLMCGFPFLLLFLGNFFTTLRVVH). Residues 331–343 (HKFHSQRHGSKKD) are Cytoplasmic-facing. Lys-332 is a binding site for CoA.

This sequence belongs to the TMEM120 family. Homodimer. Forms heterooligomer with TMEM120B. Interacts with PKD2; TMEM120A inhibits PKD2 channel activity through the physical association of PKD2 with TMEM120A. Interacts (via C-terminal domain) with STING1; regulates the trafficking of STING1 from the ER to the ER-Golgi intermediate compartment to elicit antiviral effects. In terms of tissue distribution, expressed in nociceptors.

The protein localises to the cell membrane. It localises to the nucleus inner membrane. It is found in the endoplasmic reticulum. Functionally, multifunctional protein involved in mechanosensation, and plays an essential role in lipid metabolism and adipocyte differentiation. May function as a potential ion channel involved in sensing mechanical stimuli. Mediates the mechanosensitivity of the PKD2-TMEM120A channel complex through direct physical interaction. TMEM120A seems to affect mechanosensation by inhibiting PIEZO2 channels, possibly by altering cellular lipid content. TMEM120A is structurally similar to a lipid-modifying enzyme, ELOVL7, and contains a bound coenzyme A molecule, which suggests it might function as an enzyme in lipid metabolism. Additionnaly, implicated in innate immune response against Zika virus. Acts as a key activator of the antiviral signaling involving STING1. This Homo sapiens (Human) protein is Transmembrane protein 120A.